The chain runs to 141 residues: Nucleoside diphosphate kinase (141 aa).

ATP-binding residues include lysine 11, phenylalanine 59, arginine 87, threonine 93, arginine 104, and asparagine 114. Residue histidine 117 is the Pros-phosphohistidine intermediate of the active site.

It belongs to the NDK family. Homotetramer. The cofactor is Mg(2+).

It localises to the cytoplasm. The enzyme catalyses a 2'-deoxyribonucleoside 5'-diphosphate + ATP = a 2'-deoxyribonucleoside 5'-triphosphate + ADP. It catalyses the reaction a ribonucleoside 5'-diphosphate + ATP = a ribonucleoside 5'-triphosphate + ADP. In terms of biological role, major role in the synthesis of nucleoside triphosphates other than ATP. The ATP gamma phosphate is transferred to the NDP beta phosphate via a ping-pong mechanism, using a phosphorylated active-site intermediate. The chain is Nucleoside diphosphate kinase from Nitrosomonas eutropha (strain DSM 101675 / C91 / Nm57).